The sequence spans 338 residues: Lipoate-protein ligase A (338 aa).

Residues 29 to 216 form the BPL/LPL catalytic domain; the sequence is PATQRVLFLW…AFFAHYGERV (188 aa). Residues Arg-71, 76–79, and Lys-134 each bind ATP; that span reads GAVF. Residue Lys-134 coordinates (R)-lipoate.

Belongs to the LplA family. As to quaternary structure, monomer.

It localises to the cytoplasm. The catalysed reaction is L-lysyl-[lipoyl-carrier protein] + (R)-lipoate + ATP = N(6)-[(R)-lipoyl]-L-lysyl-[lipoyl-carrier protein] + AMP + diphosphate + H(+). It functions in the pathway protein modification; protein lipoylation via exogenous pathway; protein N(6)-(lipoyl)lysine from lipoate: step 1/2. Its pathway is protein modification; protein lipoylation via exogenous pathway; protein N(6)-(lipoyl)lysine from lipoate: step 2/2. Catalyzes both the ATP-dependent activation of exogenously supplied lipoate to lipoyl-AMP and the transfer of the activated lipoyl onto the lipoyl domains of lipoate-dependent enzymes. The chain is Lipoate-protein ligase A from Shigella boydii serotype 18 (strain CDC 3083-94 / BS512).